We begin with the raw amino-acid sequence, 129 residues long: Glycine cleavage system H protein (129 aa).

The Lipoyl-binding domain occupies 24 to 106 (TFTVGITEHA…FGDGWLFRIK (83 aa)). The residue at position 65 (K65) is an N6-lipoyllysine.

The protein belongs to the GcvH family. As to quaternary structure, the glycine cleavage system is composed of four proteins: P, T, L and H. It depends on (R)-lipoate as a cofactor.

Functionally, the glycine cleavage system catalyzes the degradation of glycine. The H protein shuttles the methylamine group of glycine from the P protein to the T protein. In Pseudoalteromonas translucida (strain TAC 125), this protein is Glycine cleavage system H protein.